The chain runs to 953 residues: ABC transporter A family member 11 (953 aa).

6 consecutive transmembrane segments (helical) span residues 33-53, 230-250, 277-297, 307-327, 341-361, and 417-437; these read CLQI…EEAM, GPVF…GALV, TWEG…GMIF, FVLV…LAFA, VGFL…TGFP, and VISI…WFVL. The 246-residue stretch at 519-764 folds into the ABC transporter domain; sequence VQIHGLAKTY…FGTGFVATVS (246 aa). 565–572 is a binding site for ATP; the sequence is GPNGAGKT.

It belongs to the ABC transporter superfamily. ABCA family. CPR flippase (TC 3.A.1.211) subfamily.

It localises to the membrane. This Arabidopsis thaliana (Mouse-ear cress) protein is ABC transporter A family member 11 (ABCA11).